The chain runs to 147 residues: Large ribosomal subunit protein uL15 (147 aa).

The interval Arg-21–Gly-49 is disordered.

It belongs to the universal ribosomal protein uL15 family. As to quaternary structure, part of the 50S ribosomal subunit.

In terms of biological role, binds to the 23S rRNA. The polypeptide is Large ribosomal subunit protein uL15 (Tropheryma whipplei (strain TW08/27) (Whipple's bacillus)).